An 80-amino-acid chain; its full sequence is Large ribosomal subunit protein uL24 (80 aa).

It belongs to the universal ribosomal protein uL24 family. As to quaternary structure, part of the 50S ribosomal subunit.

In terms of biological role, one of two assembly initiator proteins, it binds directly to the 5'-end of the 23S rRNA, where it nucleates assembly of the 50S subunit. Functionally, one of the proteins that surrounds the polypeptide exit tunnel on the outside of the subunit. This chain is Large ribosomal subunit protein uL24, found in Chlorobium phaeovibrioides (strain DSM 265 / 1930) (Prosthecochloris vibrioformis (strain DSM 265)).